Consider the following 99-residue polypeptide: Cytochrome c2 iso-1 (99 aa).

Heme c is bound by residues Cys10, Cys13, His14, and Met75.

It belongs to the cytochrome c family. Binds 1 heme c group covalently per subunit.

Cytochrome c2 is found mainly in purple, non-sulfur, photosynthetic bacteria where it functions as the electron donor to the oxidized bacteriochlorophyll in the photophosphorylation pathway. However, it may also have a role in the respiratory chain and is found in some non-photosynthetic bacteria. The polypeptide is Cytochrome c2 iso-1 (Magnetospirillum fulvum (Rhodospirillum fulvum)).